Consider the following 183-residue polypeptide: MGLETVIKDIMSAAQTEVNVINADADAEVSQILDDARQTAKKIMGDRLAKAEDDIKRLRQQEISSANLEVKRAMLNARKEVLDKVYNNAIDSIVSLPGSKQEELLKAIIDENDSNGSNIYSNKDSEKLVRKLSSLEYAGNIDCIGGLTIENSDGTVRLDYTYDMILKNVNEQSLKQTSDILFG.

The protein belongs to the V-ATPase E subunit family. In terms of assembly, has multiple subunits with at least A(3), B(3), C, D, E, F, H, I and proteolipid K(x).

It localises to the cell membrane. In terms of biological role, component of the A-type ATP synthase that produces ATP from ADP in the presence of a proton gradient across the membrane. This Methanococcoides burtonii (strain DSM 6242 / NBRC 107633 / OCM 468 / ACE-M) protein is A-type ATP synthase subunit E.